We begin with the raw amino-acid sequence, 159 residues long: 2-C-methyl-D-erythritol 2,4-cyclodiphosphate synthase (159 aa).

A divalent metal cation is bound by residues aspartate 10 and histidine 12. Residues 10-12 and 36-37 contribute to the 4-CDP-2-C-methyl-D-erythritol 2-phosphate site; these read DVH and HS. Histidine 44 contributes to the a divalent metal cation binding site. Residues 58–60, 134–137, phenylalanine 141, and arginine 144 contribute to the 4-CDP-2-C-methyl-D-erythritol 2-phosphate site; these read DIG and TTTE.

This sequence belongs to the IspF family. Homotrimer. A divalent metal cation serves as cofactor.

The catalysed reaction is 4-CDP-2-C-methyl-D-erythritol 2-phosphate = 2-C-methyl-D-erythritol 2,4-cyclic diphosphate + CMP. Its pathway is isoprenoid biosynthesis; isopentenyl diphosphate biosynthesis via DXP pathway; isopentenyl diphosphate from 1-deoxy-D-xylulose 5-phosphate: step 4/6. Its function is as follows. Involved in the biosynthesis of isopentenyl diphosphate (IPP) and dimethylallyl diphosphate (DMAPP), two major building blocks of isoprenoid compounds. Catalyzes the conversion of 4-diphosphocytidyl-2-C-methyl-D-erythritol 2-phosphate (CDP-ME2P) to 2-C-methyl-D-erythritol 2,4-cyclodiphosphate (ME-CPP) with a corresponding release of cytidine 5-monophosphate (CMP). In Bacteroides fragilis (strain ATCC 25285 / DSM 2151 / CCUG 4856 / JCM 11019 / LMG 10263 / NCTC 9343 / Onslow / VPI 2553 / EN-2), this protein is 2-C-methyl-D-erythritol 2,4-cyclodiphosphate synthase.